The following is a 398-amino-acid chain: Dual-specificity RNA methyltransferase RlmN (398 aa).

The active-site Proton acceptor is E119. Positions 125 to 364 constitute a Radical SAM core domain; the sequence is DGDRATLCVS…TIVRKTRGDD (240 aa). C132 and C369 are disulfide-bonded. Residues C139, C143, and C146 each coordinate [4Fe-4S] cluster. S-adenosyl-L-methionine contacts are provided by residues 193–194, S225, 247–249, and N326; these read GE and SLH. Catalysis depends on C369, which acts as the S-methylcysteine intermediate.

It belongs to the radical SAM superfamily. RlmN family. It depends on [4Fe-4S] cluster as a cofactor.

It is found in the cytoplasm. The enzyme catalyses adenosine(2503) in 23S rRNA + 2 reduced [2Fe-2S]-[ferredoxin] + 2 S-adenosyl-L-methionine = 2-methyladenosine(2503) in 23S rRNA + 5'-deoxyadenosine + L-methionine + 2 oxidized [2Fe-2S]-[ferredoxin] + S-adenosyl-L-homocysteine. It catalyses the reaction adenosine(37) in tRNA + 2 reduced [2Fe-2S]-[ferredoxin] + 2 S-adenosyl-L-methionine = 2-methyladenosine(37) in tRNA + 5'-deoxyadenosine + L-methionine + 2 oxidized [2Fe-2S]-[ferredoxin] + S-adenosyl-L-homocysteine. Its function is as follows. Specifically methylates position 2 of adenine 2503 in 23S rRNA and position 2 of adenine 37 in tRNAs. m2A2503 modification seems to play a crucial role in the proofreading step occurring at the peptidyl transferase center and thus would serve to optimize ribosomal fidelity. This is Dual-specificity RNA methyltransferase RlmN from Serratia proteamaculans (strain 568).